We begin with the raw amino-acid sequence, 773 residues long: Circadian clock protein PASD1 (773 aa).

One can recognise a PAS domain in the interval 30–102 (YDYFNQVTLQ…IILKFPLLNS (73 aa)). Positions 313–361 (SVDQEGPMDQQDPENPVAPLDQAGLMDPVDPEDSVDLGAAGASAQPLQP) are disordered. The necessary for transcriptional repression stretch occupies residues 365–412 (VAYDIISQELELMKKLKEQLEERTWLLHDAIQNQQNALELMMDHLQKQ). Residues 365–412 (VAYDIISQELELMKKLKEQLEERTWLLHDAIQNQQNALELMMDHLQKQ) adopt a coiled-coil conformation. 3 disordered regions span residues 427-448 (SEAVPKKQQKQHAGQVKRPLPH), 506-569 (QRKV…QLQE), and 732-773 (GVEG…NKPC). Residues 475 to 553 (VAFNQQQLVQ…QERKKWQGQM (79 aa)) are a coiled coil. Basic and acidic residues predominate over residues 506–536 (QRKVQKQKKMQEKKKLQEQKMQEKKKLQEQR).

Interacts with the CLOCK-BMAL1 heterodimer; this interaction inhibits CLOCK-BMAL1 transcriptional activation and suppress circadian timekeeping. Interacts with BMAL1. As to expression, testis-specific. Expressed in a broad range of cancer cells, including melanoma, lung cancer, and breast cancer (at protein level). Testis-specific. Found in histologically normal tissues from patients with uterus, lung and small intestine cancers. Widespread expression seen in solid tumors and diffuse large B-cell lymphoma (DLBCL)-derived cell lines. Isoform 2 is expressed in all DLBCL-derived cell lines, while isoform 1 is preferentially expressed in cell lines derived from non-germinal center DLBCL.

It localises to the nucleus. Functionally, functions as a suppressor of the biological clock that drives the daily circadian rhythms of cells throughout the body. Acts as a nuclear repressor of the CLOCK-BMAL1 heterodimer-mediated transcriptional activation of the core clock components. Inhibits circadian clock function in cancer cells, when overexpressed. The protein is Circadian clock protein PASD1 of Homo sapiens (Human).